Reading from the N-terminus, the 397-residue chain is Phosphoglycerate kinase (397 aa).

Substrate contacts are provided by residues 21–23 (DVN), R36, 59–62 (HFGR), R119, and R152. Residues K202, E324, and 354–357 (GGDT) contribute to the ATP site.

It belongs to the phosphoglycerate kinase family. Monomer.

The protein resides in the cytoplasm. The catalysed reaction is (2R)-3-phosphoglycerate + ATP = (2R)-3-phospho-glyceroyl phosphate + ADP. The protein operates within carbohydrate degradation; glycolysis; pyruvate from D-glyceraldehyde 3-phosphate: step 2/5. The chain is Phosphoglycerate kinase from Cereibacter sphaeroides (strain KD131 / KCTC 12085) (Rhodobacter sphaeroides).